The primary structure comprises 87 residues: Cell division topological specificity factor (87 aa).

It belongs to the MinE family.

Its function is as follows. Prevents the cell division inhibition by proteins MinC and MinD at internal division sites while permitting inhibition at polar sites. This ensures cell division at the proper site by restricting the formation of a division septum at the midpoint of the long axis of the cell. In Roseiflexus castenholzii (strain DSM 13941 / HLO8), this protein is Cell division topological specificity factor.